We begin with the raw amino-acid sequence, 276 residues long: ADP-dependent (S)-NAD(P)H-hydrate dehydratase (276 aa).

The YjeF C-terminal domain maps to 7 to 275; the sequence is TEEHVRATLP…DILPRVWKRF (269 aa). Residues A42, G104, and H149 each contribute to the (6S)-NADPHX site. Residues 186-190 and G215 each bind AMP; that span reads KGNQT. Residue D216 participates in (6S)-NADPHX binding.

This sequence belongs to the NnrD/CARKD family. As to quaternary structure, homotetramer. It depends on Mg(2+) as a cofactor.

It catalyses the reaction (6S)-NADHX + ADP = AMP + phosphate + NADH + H(+). The catalysed reaction is (6S)-NADPHX + ADP = AMP + phosphate + NADPH + H(+). Catalyzes the dehydration of the S-form of NAD(P)HX at the expense of ADP, which is converted to AMP. Together with NAD(P)HX epimerase, which catalyzes the epimerization of the S- and R-forms, the enzyme allows the repair of both epimers of NAD(P)HX, a damaged form of NAD(P)H that is a result of enzymatic or heat-dependent hydration. The chain is ADP-dependent (S)-NAD(P)H-hydrate dehydratase from Bacillus subtilis (strain 168).